A 272-amino-acid chain; its full sequence is Ribosomal RNA large subunit methyltransferase E (272 aa).

S-adenosyl-L-methionine is bound by residues G50, W52, D68, D84, and D109. K149 (proton acceptor) is an active-site residue. The region spanning 196 to 254 (PLRRGDKFVVDIEKLGSGGDGAVLIEGFVVFVKEVEVGEKVRIKIADVKPNFAFADVEE) is the TRAM domain.

This sequence belongs to the class I-like SAM-binding methyltransferase superfamily. RNA methyltransferase RlmE family.

The protein localises to the cytoplasm. It catalyses the reaction uridine(2552) in 23S rRNA + S-adenosyl-L-methionine = 2'-O-methyluridine(2552) in 23S rRNA + S-adenosyl-L-homocysteine + H(+). Its function is as follows. Specifically methylates the uridine in position 2552 of 23S rRNA at the 2'-O position of the ribose in the fully assembled 50S ribosomal subunit. In Methanosarcina acetivorans (strain ATCC 35395 / DSM 2834 / JCM 12185 / C2A), this protein is Ribosomal RNA large subunit methyltransferase E.